The sequence spans 877 residues: Protein P (877 aa).

The terminal protein domain (TP) stretch occupies residues 1–183 (MHPFSQLFRN…GKPYSWGHRQ (183 aa)). Positions 184-382 (LEQHNGQQHE…YCLHHIVSSL (199 aa)) are spacer. Over residues 185 to 198 (EQHNGQQHESHLQS) the composition is skewed to basic and acidic residues. The segment at 185-347 (EQHNGQQHES…PSSSGLCGGT (163 aa)) is disordered. Residues 233–242 (FGESQKSART) show a composition bias toward polar residues. Residues 267 to 281 (QQGSSQVSSPRSKSS) are compositionally biased toward low complexity. Composition is skewed to polar residues over residues 282–302 (NFRN…PTWY) and 338–347 (PSSSGLCGGT). A polymerase/reverse transcriptase domain (RT) region spans residues 383 to 723 (EDWGPCTISG…YAELWPVARQ (341 aa)). One can recognise a Reverse transcriptase domain in the interval 393-634 (DVTIRSPRTP…HHLHFMGYVI (242 aa)). Mg(2+)-binding residues include Asp-465, Asp-585, and Asp-586.

The protein belongs to the hepadnaviridae P protein family.

The catalysed reaction is DNA(n) + a 2'-deoxyribonucleoside 5'-triphosphate = DNA(n+1) + diphosphate. The enzyme catalyses Endonucleolytic cleavage to 5'-phosphomonoester.. Activated by host HSP70 and HSP40 in vitro to be able to bind the epsilon loop of the pgRNA. Because deletion of the RNase H region renders the protein partly chaperone-independent, the chaperones may be needed indirectly to relieve occlusion of the RNA-binding site by this domain. Inhibited by several reverse-transcriptase inhibitors: Lamivudine, Adefovir and Entecavir. Functionally, multifunctional enzyme that converts the viral RNA genome into dsDNA in viral cytoplasmic capsids. This enzyme displays a DNA polymerase activity that can copy either DNA or RNA templates, and a ribonuclease H (RNase H) activity that cleaves the RNA strand of RNA-DNA heteroduplexes in a partially processive 3'- to 5'-endonucleasic mode. Neo-synthesized pregenomic RNA (pgRNA) are encapsidated together with the P protein, and reverse-transcribed inside the nucleocapsid. Initiation of reverse-transcription occurs first by binding the epsilon loop on the pgRNA genome, and is initiated by protein priming, thereby the 5'-end of (-)DNA is covalently linked to P protein. Partial (+)DNA is synthesized from the (-)DNA template and generates the relaxed circular DNA (RC-DNA) genome. After budding and infection, the RC-DNA migrates in the nucleus, and is converted into a plasmid-like covalently closed circular DNA (cccDNA). The activity of P protein does not seem to be necessary for cccDNA generation, and is presumably released from (+)DNA by host nuclear DNA repair machinery. The chain is Protein P from Arctic squirrel hepatitis virus (ASHV).